Reading from the N-terminus, the 498-residue chain is MSLGMLSPHLNTPPPNNQGILIGDKVYSEVFLAIDNSIIPEDRLSTTPSMLDGLDHETETDLRILGCERIQSAGILLRLPQVAMATGQVIFQRFFFSKSFVKHNFEIVAMACVNLASKIEESPRRVRDVINVFHHLKQGKGKKSTPLILDQNYINTKNQVIKAERRILKELGFCVHVKHPHKIIVMYLQVLECEKNQMLVQTAWNYMNDALRTSAFVRFEPETIACACIYLAARVLQIPLPSKPHWFLLFGATKEDIKEICINTMKLYSREKPHSEQLERQVEKRKIFLEEARLKARGQNPNGTPALASINGFSPASKPSSPRDVKMDDKSPNSKLKEPENRQLFAKSPLNGSIKKEDGKVFQNGKNHSRSRSRSTSRSPHRHRRSHSGTYSSHSSHSPSPRQKARRPSPISQLRTDRDRPSETSRHSNKRRRSRSRSRSNSRERVRDRDHIKHKQERSGSGHHWDHRDRERDRSRDHGRNKRQSRSHSGHSHSRHRR.

2 cyclin-like regions span residues 68–169 and 182–266; these read ERIQ…RILK and KIIV…NTMK. Residues 294–498 form a disordered region; sequence LKARGQNPNG…SGHSHSRHRR (205 aa). A compositionally biased stretch (polar residues) spans 311-320; sequence NGFSPASKPS. Residues 321-341 show a composition bias toward basic and acidic residues; sequence SPRDVKMDDKSPNSKLKEPEN. Residues 366–396 form an RS region; that stretch reads KNHSRSRSRSTSRSPHRHRRSHSGTYSSHSS. The span at 367–387 shows a compositional bias: basic residues; the sequence is NHSRSRSRSTSRSPHRHRRSH. Residues 388-402 are compositionally biased toward low complexity; the sequence is SGTYSSHSSHSPSPR. A phosphoserine mark is found at serine 409 and serine 412. Over residues 415–426 the composition is skewed to basic and acidic residues; that stretch reads RTDRDRPSETSR. Residues 427 to 440 show a composition bias toward basic residues; that stretch reads HSNKRRRSRSRSRS. Positions 441-478 are enriched in basic and acidic residues; sequence NSRERVRDRDHIKHKQERSGSGHHWDHRDRERDRSRDH. Positions 479–498 are enriched in basic residues; sequence GRNKRQSRSHSGHSHSRHRR.

It belongs to the cyclin family. Cyclin L subfamily.

Its subcellular location is the nucleus speckle. The protein resides in the nucleus. The protein localises to the nucleoplasm. Functionally, involved in pre-mRNA splicing. The chain is Cyclin-L1 (ccnl1) from Danio rerio (Zebrafish).